Consider the following 177-residue polypeptide: Large ribosomal subunit protein uL6 (177 aa).

Residues 157 to 177 (YKGKGVRYAGEKVRRKEGKKK) form a disordered region.

The protein belongs to the universal ribosomal protein uL6 family. As to quaternary structure, part of the 50S ribosomal subunit.

Its function is as follows. This protein binds to the 23S rRNA, and is important in its secondary structure. It is located near the subunit interface in the base of the L7/L12 stalk, and near the tRNA binding site of the peptidyltransferase center. In Caulobacter vibrioides (strain ATCC 19089 / CIP 103742 / CB 15) (Caulobacter crescentus), this protein is Large ribosomal subunit protein uL6.